A 196-amino-acid chain; its full sequence is HTH-type transcriptional regulator EcpR (196 aa).

The region spanning 138–196 (KDIKKDKITDREMEIIRMTAQGMLPKSIARIENCSVKTVYTHRRNAEAKLYSKLYKLVQ) is the HTH luxR-type domain. The segment at residues 162–181 (PKSIARIENCSVKTVYTHRR) is a DNA-binding region (H-T-H motif).

This sequence belongs to the EcpR/MatA family.

The protein resides in the cytoplasm. Its function is as follows. Part of the ecpRABCDE operon, which encodes the E.coli common pilus (ECP). ECP is found in both commensal and pathogenic strains and plays a dual role in early-stage biofilm development and host cell recognition. Positively regulates the expression of the ecp operon by binding to two TTCCT boxes. The sequence is that of HTH-type transcriptional regulator EcpR (ecpR) from Escherichia coli O157:H7.